A 393-amino-acid chain; its full sequence is NAD(P)H-quinone oxidoreductase subunit H, chloroplastic (393 aa).

The protein belongs to the complex I 49 kDa subunit family. As to quaternary structure, NDH is composed of at least 16 different subunits, 5 of which are encoded in the nucleus.

The protein resides in the plastid. The protein localises to the chloroplast thylakoid membrane. It catalyses the reaction a plastoquinone + NADH + (n+1) H(+)(in) = a plastoquinol + NAD(+) + n H(+)(out). The catalysed reaction is a plastoquinone + NADPH + (n+1) H(+)(in) = a plastoquinol + NADP(+) + n H(+)(out). In terms of biological role, NDH shuttles electrons from NAD(P)H:plastoquinone, via FMN and iron-sulfur (Fe-S) centers, to quinones in the photosynthetic chain and possibly in a chloroplast respiratory chain. The immediate electron acceptor for the enzyme in this species is believed to be plastoquinone. Couples the redox reaction to proton translocation, and thus conserves the redox energy in a proton gradient. The sequence is that of NAD(P)H-quinone oxidoreductase subunit H, chloroplastic from Calycanthus floridus var. glaucus (Eastern sweetshrub).